Reading from the N-terminus, the 419-residue chain is Tyrosine--tRNA ligase 2 (419 aa).

Residue Tyr-34 coordinates L-tyrosine. The short motif at 39 to 48 (PTGDSMHIGH) is the 'HIGH' region element. The L-tyrosine site is built by Tyr-168 and Gln-172. The 'KMSKS' region signature appears at 230 to 234 (KFGKS). Position 233 (Lys-233) interacts with ATP. Positions 352–418 (KNIVEWLVDL…GKKNYSLVKL (67 aa)) constitute an S4 RNA-binding domain.

It belongs to the class-I aminoacyl-tRNA synthetase family. TyrS type 1 subfamily. In terms of assembly, homodimer.

The protein localises to the cytoplasm. The enzyme catalyses tRNA(Tyr) + L-tyrosine + ATP = L-tyrosyl-tRNA(Tyr) + AMP + diphosphate + H(+). In terms of biological role, catalyzes the attachment of tyrosine to tRNA(Tyr) in a two-step reaction: tyrosine is first activated by ATP to form Tyr-AMP and then transferred to the acceptor end of tRNA(Tyr). This Bacillus anthracis protein is Tyrosine--tRNA ligase 2.